The sequence spans 712 residues: DNA ligase (712 aa).

NAD(+) contacts are provided by residues 53-57 (DAEFD), 103-104 (SL), and Glu-133. The N6-AMP-lysine intermediate role is filled by Lys-135. NAD(+)-binding residues include Arg-156, Glu-196, Lys-315, and Lys-339. 4 residues coordinate Zn(2+): Cys-433, Cys-436, Cys-452, and Cys-458. Residues 622–711 (SIERTLEGLS…PERDAEDGEP (90 aa)) form the BRCT domain.

The protein belongs to the NAD-dependent DNA ligase family. LigA subfamily. Mg(2+) serves as cofactor. It depends on Mn(2+) as a cofactor.

The catalysed reaction is NAD(+) + (deoxyribonucleotide)n-3'-hydroxyl + 5'-phospho-(deoxyribonucleotide)m = (deoxyribonucleotide)n+m + AMP + beta-nicotinamide D-nucleotide.. In terms of biological role, DNA ligase that catalyzes the formation of phosphodiester linkages between 5'-phosphoryl and 3'-hydroxyl groups in double-stranded DNA using NAD as a coenzyme and as the energy source for the reaction. It is essential for DNA replication and repair of damaged DNA. This Mycolicibacterium gilvum (strain PYR-GCK) (Mycobacterium gilvum (strain PYR-GCK)) protein is DNA ligase.